A 369-amino-acid chain; its full sequence is Probable trehalose-phosphate phosphatase D (369 aa).

A disordered region spans residues 63 to 85; sequence RASSPTRTRPGNISPLPESDEED.

It belongs to the trehalose phosphatase family. A divalent metal cation is required as a cofactor.

It carries out the reaction alpha,alpha-trehalose 6-phosphate + H2O = alpha,alpha-trehalose + phosphate. The protein operates within glycan biosynthesis; trehalose biosynthesis. Removes the phosphate from trehalose 6-phosphate to produce free trehalose. Trehalose accumulation in plant may improve abiotic stress tolerance. In Arabidopsis thaliana (Mouse-ear cress), this protein is Probable trehalose-phosphate phosphatase D (TPPD).